The following is a 350-amino-acid chain: Transmembrane protein 185B (350 aa).

Helical transmembrane passes span 16–36 (LIYA…DGVI), 41–61 (WAVF…ASVG), 81–101 (FKAM…EVLV), 111–131 (FWLL…AACV), 168–188 (WLVV…VVLY), 211–231 (VTMA…EVLL), and 240–260 (MFSY…LMAT).

The protein belongs to the TMEM185 family.

It is found in the membrane. This chain is Transmembrane protein 185B (TMEM185B), found in Bos taurus (Bovine).